A 249-amino-acid chain; its full sequence is MRRKIIAANWKMYKTCAETESFIKEFIELSKGYEEKEIVICPPFTSLYVASKLLKDTAIKLGAQNMFWEKEGAYTGEISPIMLKDLNCTYVIIGHSERRNYFSETNEMINKKIKSAFNYGLIPIFCVGEKWEERERGKTEEVITKQVREGLEGLEKENVEKIVIAYEPVWAIGTGHSAKGEDANEVAGLIRKIISEMYDTEVSQKIRIQYGGSVNPQNITEFLSQNEIDGALVGGASLKPQSFWNIVKS.

9–11 contacts substrate; it reads NWK. The active-site Electrophile is His95. The active-site Proton acceptor is Glu167. Substrate is bound by residues Gly173, Ser213, and 234–235; that span reads GG.

This sequence belongs to the triosephosphate isomerase family. In terms of assembly, homodimer.

It localises to the cytoplasm. The enzyme catalyses D-glyceraldehyde 3-phosphate = dihydroxyacetone phosphate. It functions in the pathway carbohydrate biosynthesis; gluconeogenesis. Its pathway is carbohydrate degradation; glycolysis; D-glyceraldehyde 3-phosphate from glycerone phosphate: step 1/1. In terms of biological role, involved in the gluconeogenesis. Catalyzes stereospecifically the conversion of dihydroxyacetone phosphate (DHAP) to D-glyceraldehyde-3-phosphate (G3P). The chain is Triosephosphate isomerase from Dictyoglomus thermophilum (strain ATCC 35947 / DSM 3960 / H-6-12).